We begin with the raw amino-acid sequence, 341 residues long: Solute carrier family 25 member 43 (341 aa).

Solcar repeat units lie at residues 11-101, 105-185, and 200-298; these read TGSQ…MDDL, SQWS…LLVY, and SHLQ…LYQN. The next 6 membrane-spanning stretches (helical) occupy residues 16–36, 68–88, 110–130, 166–186, 205–225, and 262–282; these read LLCAGLAGAFSLSLTAPLELA, LWKGNGVACLRLFPCSMVQLA, IVTGSLAGMVSTIVTYPTDLI, GVSLTVLGAVPFSAGSLLVYM, FANVCVAAAVSQTLSFPFDTV, and VLGLWNGLTANLLKVVPYFGV.

It belongs to the mitochondrial carrier (TC 2.A.29) family.

It is found in the mitochondrion inner membrane. The polypeptide is Solute carrier family 25 member 43 (Slc25a43) (Mus musculus (Mouse)).